The sequence spans 260 residues: Acetylglutamate kinase (260 aa).

Residues 46–47 (GG), Arg68, and Asn160 each bind substrate.

Belongs to the acetylglutamate kinase family. ArgB subfamily.

It is found in the cytoplasm. The catalysed reaction is N-acetyl-L-glutamate + ATP = N-acetyl-L-glutamyl 5-phosphate + ADP. It functions in the pathway amino-acid biosynthesis; L-arginine biosynthesis; N(2)-acetyl-L-ornithine from L-glutamate: step 2/4. Functionally, catalyzes the ATP-dependent phosphorylation of N-acetyl-L-glutamate. This chain is Acetylglutamate kinase, found in Shewanella baltica (strain OS223).